We begin with the raw amino-acid sequence, 233 residues long: Lipoprotein-releasing system ATP-binding protein LolD (233 aa).

The ABC transporter domain maps to 10–233 (YRLEGVGKEY…AGELYDQHRP (224 aa)). Residue 46–53 (GASGSGKS) coordinates ATP.

This sequence belongs to the ABC transporter superfamily. Lipoprotein translocase (TC 3.A.1.125) family. The complex is composed of two ATP-binding proteins (LolD) and two transmembrane proteins (LolC and LolE).

The protein resides in the cell inner membrane. Its function is as follows. Part of the ABC transporter complex LolCDE involved in the translocation of mature outer membrane-directed lipoproteins, from the inner membrane to the periplasmic chaperone, LolA. Responsible for the formation of the LolA-lipoprotein complex in an ATP-dependent manner. This Nitratidesulfovibrio vulgaris (strain ATCC 29579 / DSM 644 / CCUG 34227 / NCIMB 8303 / VKM B-1760 / Hildenborough) (Desulfovibrio vulgaris) protein is Lipoprotein-releasing system ATP-binding protein LolD.